Reading from the N-terminus, the 329-residue chain is Helicase VP6-A (329 aa).

2 disordered regions span residues 28 to 130 and 189 to 232; these read NLVD…TNGG and DLRR…SEEP. 3 stretches are compositionally biased toward basic and acidic residues: residues 36–58, 65–83, and 96–109; these read EGGK…KDGE, GQKE…DRRI, and SGER…RGDG. K110 provides a ligand contact to ATP. The segment covering 110-129 has biased composition (gly residues); sequence KVGGGGGDADAGVGATGTNG. 2 stretches are compositionally biased toward basic and acidic residues: residues 189-207 and 215-232; these read DLRR…ERGG and HGDA…SEEP.

Belongs to the reoviruses VP6 family. As to quaternary structure, homohexamer.

Its subcellular location is the virion. It catalyses the reaction ATP + H2O = ADP + phosphate + H(+). Functionally, ATP dependent RNA helicase essential for RNA packaging and viral transcription. Possesses ss- and dsRNA-binding capacity. This chain is Helicase VP6-A (Segment-9), found in Bluetongue virus 10 (isolate USA) (BTV 10).